The primary structure comprises 887 residues: Tubulin polyglutamylase TTLL7 (887 aa).

The segment at 1 to 21 is disordered; it reads MPSLPQEGVIQGPSPLDLNTE. Residues 38 to 390 form the TTL domain; that stretch reads KGTITANVAG…RTSDKRRNLA (353 aa). Residues lysine 160, 166–167, 188–191, and 201–203 contribute to the ATP site; these read MG, QEYI, and KFD. Arginine 227 contributes to the L-glutamate binding site. Residue 249-250 coordinates ATP; it reads TN. 3 residues coordinate L-glutamate: tyrosine 251, serine 252, and lysine 271. The Mg(2+) site is built by aspartate 336, glutamate 349, and asparagine 351. L-glutamate is bound at residue lysine 367. A c-MTBD region region spans residues 388-450; sequence NLAKQKAEAQ…ISREEHENRH (63 aa). 2 disordered regions span residues 519 to 621 and 651 to 676; these read MGKT…TRPF and LPHS…TKEQ. Over residues 548–560 the composition is skewed to low complexity; it reads SSDSSYDSSSSSS. Polar residues-rich tracts occupy residues 593–621 and 656–670; these read QQPS…TRPF and DACS…SLRQ.

Belongs to the tubulin--tyrosine ligase family. Interacts with both alpha- and beta-tubulin (via C-terminal tubulin tails). The cofactor is Mg(2+). Highly expressed in the nervous system including spinal cord, thalamus, hippocampus, hypothalamus and cerebellum.

It localises to the cell projection. Its subcellular location is the cilium. It is found in the cytoplasm. The protein resides in the cytoskeleton. The protein localises to the cilium basal body. It localises to the dendrite. Its subcellular location is the perikaryon. It carries out the reaction L-glutamyl-[protein] + L-glutamate + ATP = gamma-L-glutamyl-L-glutamyl-[protein] + ADP + phosphate + H(+). It catalyses the reaction (L-glutamyl)(n)-gamma-L-glutamyl-L-glutamyl-[protein] + L-glutamate + ATP = (L-glutamyl)(n+1)-gamma-L-glutamyl-L-glutamyl-[protein] + ADP + phosphate + H(+). Its function is as follows. Polyglutamylase which modifies tubulin, generating polyglutamate side chains of variable lengths on the gamma-carboxyl group of specific glutamate residues within the C-terminal tail of tubulin. Mediates both ATP-dependent initiation and elongation steps of the polyglutamylation reaction. Preferentially modifies the beta-tubulin tail over an alpha-tail. Competes with monoglycylase TTLL3 for modification site on beta-tubulin substrate, thereby creating an anticorrelation between glycylation and glutamylation reactions. Required for neurite growth; responsible for the strong increase in tubulin polyglutamylation during postnatal neuronal maturation. The protein is Tubulin polyglutamylase TTLL7 of Homo sapiens (Human).